The following is a 398-amino-acid chain: O-methyltransferase mpaG' (398 aa).

S144 contributes to the (4E,8E)-10-(4,6-dihydroxy-7-methyl-3-oxo-1,3-dihydro-2-benzofuran-5-yl)-4,8-dimethyldeca-4,8-dienoate binding site. Residue S144 coordinates 4-farnesyl-3,5-dihydroxy-6-methylphthalide. S144 provides a ligand contact to 6-O-desmethylmycophenolate. N197 is a binding site for S-adenosyl-L-homocysteine. Residue Y199 coordinates (4E,8E)-10-(4,6-dihydroxy-7-methyl-3-oxo-1,3-dihydro-2-benzofuran-5-yl)-4,8-dimethyldeca-4,8-dienoate. Y199 contributes to the 4-farnesyl-3,5-dihydroxy-6-methylphthalide binding site. Y199 contacts 6-O-desmethylmycophenolate. Residues Y203, D237, G239, H244, D245, D264, and R265 each coordinate S-adenosyl-L-homocysteine. D264 contributes to the S-adenosyl-L-methionine binding site. R265 and Q267 together coordinate (4E,8E)-10-(4,6-dihydroxy-7-methyl-3-oxo-1,3-dihydro-2-benzofuran-5-yl)-4,8-dimethyldeca-4,8-dienoate. R265 lines the 6-O-desmethylmycophenolate pocket. S-adenosyl-L-homocysteine is bound by residues D286, I287, and H302. S303 provides a ligand contact to (4E,8E)-10-(4,6-dihydroxy-7-methyl-3-oxo-1,3-dihydro-2-benzofuran-5-yl)-4,8-dimethyldeca-4,8-dienoate. S303 provides a ligand contact to 4-farnesyl-3,5-dihydroxy-6-methylphthalide. S303 contacts 6-O-desmethylmycophenolate. Catalysis depends on H306, which acts as the Proton acceptor. Active-site residues include E335 and E362.

The protein belongs to the class I-like SAM-binding methyltransferase superfamily. Cation-independent O-methyltransferase family. Homodimer.

Its subcellular location is the cytoplasm. It localises to the cytosol. The catalysed reaction is (4E,8E)-10-(4,6-dihydroxy-7-methyl-3-oxo-1,3-dihydro-2-benzofuran-5-yl)-4,8-dimethyldeca-4,8-dienoate + S-adenosyl-L-methionine = (4E,8E)-10-(4-hydroxy-6-methoxy-7-methyl-3-oxo-1,3-dihydro-2-benzofuran-5-yl)-4,8-dimethyldeca-4,8-dienoate + S-adenosyl-L-homocysteine + H(+). The enzyme catalyses 4-farnesyl-3,5-dihydroxy-6-methylphthalide + S-adenosyl-L-methionine = 4-farnesyl-3,5-dihydroxy-6-methoxylphthalide + S-adenosyl-L-homocysteine + H(+). It catalyses the reaction 6-O-desmethylmycophenolate + S-adenosyl-L-methionine = mycophenolate + S-adenosyl-L-homocysteine + H(+). It participates in secondary metabolite biosynthesis; terpenoid biosynthesis. O-methyltransferase; part of the gene cluster that mediates the biosynthesis of mycophenolic acid (MPA), the first isolated antibiotic natural product in the world obtained from a culture of Penicillium brevicompactum in 1893. MpaG' catalyzes the 5-O-methylation of three precursors in MPA biosynthesis including demethylmycophenolic acid (DMMPA), 4-farnesyl-3,5-dihydroxy-6-methylphthalide (FDHMP), and an intermediate containing three fewer carbon atoms compared to FDHMP (FDHMP-3C) with different catalytic efficiencies. The first step of the pathway is the synthesis of 5-methylorsellinic acid (5MOA) by the cytosolic polyketide synthase mpaC. 5MOA is then converted to the phthalide compound 5,7-dihydroxy-4,6-dimethylphthalide (DHMP) by the endoplasmic reticulum-bound cytochrome P450 monooxygenase mpaDE. MpaDE first catalyzes hydroxylation of 5-MOA to 4,6-dihydroxy-2-(hydroxymethyl)-3-methylbenzoic acid (DHMB). MpaDE then acts as a lactone synthase that catalyzes the ring closure to convert DHMB into DHMP. The next step is the prenylation of DHMP by the Golgi apparatus-associated prenyltransferase mpaA to yield farnesyl-DHMP (FDHMP). The ER-bound oxygenase mpaB then mediates the oxidative cleavage the C19-C20 double bond in FDHMP to yield FDHMP-3C via a mycophenolic aldehyde intermediate. The O-methyltransferase mpaG catalyzes the methylation of FDHMP-3C to yield MFDHMP-3C. MpaG and mpaB can also switch the order in which they act and, in this case, the conversion of FDHMP to MFDHMP-3C can take place via 5-O-methyl-FDHMP (MFDHMP). After the cytosolic methylation of FDHMP-3C, MFDHMP-3C enters into peroxisomes probably via free diffusion due to its low molecular weight. Upon a peroxisomal CoA ligation reaction, catalyzed by a beta-oxidation component enzyme acyl-CoA ligase ACL891, MFDHMP-3C-CoA would then be restricted to peroxisomes for the following beta-oxidation pathway steps. The peroxisomal beta-oxidation machinery than converts MFDHMP-3C-CoA into MPA_CoA, via a beta-oxidation chain-shortening process. Finally mpaH acts as a peroxisomal acyl-CoA hydrolase with high substrate specificity toward MPA-CoA to release the final product MPA. MpaH can also hydrolyze DMMPA-CoA to release demethylmycophenolic acid (DMMPA) that is further converted to MPA by mpaG. This is O-methyltransferase mpaG' from Penicillium brevicompactum.